Here is a 275-residue protein sequence, read N- to C-terminus: 2-dehydro-3-deoxyphosphooctonate aldolase (275 aa).

The protein belongs to the KdsA family.

It localises to the cytoplasm. The catalysed reaction is D-arabinose 5-phosphate + phosphoenolpyruvate + H2O = 3-deoxy-alpha-D-manno-2-octulosonate-8-phosphate + phosphate. It participates in carbohydrate biosynthesis; 3-deoxy-D-manno-octulosonate biosynthesis; 3-deoxy-D-manno-octulosonate from D-ribulose 5-phosphate: step 2/3. The protein operates within bacterial outer membrane biogenesis; lipopolysaccharide biosynthesis. This Francisella tularensis subsp. novicida (strain U112) protein is 2-dehydro-3-deoxyphosphooctonate aldolase.